A 1381-amino-acid chain; its full sequence is Contactin-associated protein 1 (1381 aa).

A signal peptide spans 1–20 (MMSLRLFSILLAAVVSGAQG). At 21 to 1284 (WGYYGCNEEL…PYYHDDGWIA (1264 aa)) the chain is on the extracellular side. An F5/8 type C domain is found at 26-169 (CNEELVGPLY…IGLRLGIYGC (144 aa)). A disulfide bridge links Cys-26 with Cys-169. N-linked (GlcNAc...) asparagine glycosylation is found at Asn-121, Asn-129, and Asn-277. Laminin G-like domains are found at residues 204–356 (FKTE…AFRC) and 390–539 (FRTW…FDTC). Cys-324 and Cys-356 are oxidised to a cystine. Asn-421, Asn-500, and Asn-519 each carry an N-linked (GlcNAc...) asparagine glycan. 4 disulfide bridges follow: Cys-507–Cys-539, Cys-545–Cys-556, Cys-550–Cys-565, and Cys-567–Cys-577. In terms of domain architecture, EGF-like 1 spans 544 to 576 (RCSPNMCEHDGRCYQSWDDFICYCELTGYKGVT). The Fibrinogen C-terminal domain occupies 577 to 796 (CHEPLYKESC…NTISFRTGAA (220 aa)). N-linked (GlcNAc...) asparagine glycans are attached at residues Asn-598, Asn-654, Asn-665, Asn-764, Asn-805, Asn-844, Asn-861, Asn-949, and Asn-957. In terms of domain architecture, Laminin G-like 3 spans 814-958 (FRTSAPSGVF…NASEGTFPNC (145 aa)). 4 cysteine pairs are disulfide-bonded: Cys-931–Cys-958, Cys-962–Cys-975, Cys-969–Cys-984, and Cys-986–Cys-996. Positions 962 to 996 (CTHPRFPCFHGGRCVERYSYYTCDCDLTAFDGPYC) constitute an EGF-like 2 domain. Asn-1079 and Asn-1148 each carry an N-linked (GlcNAc...) asparagine glycan. Positions 1089–1251 (FSTSSAPAVL…VQGELSESNC (163 aa)) constitute a Laminin G-like 4 domain. A disulfide bridge connects residues Cys-1210 and Cys-1251. The helical transmembrane segment at 1285–1305 (ILLGFLVAFLLLGLVGMLVLF) threads the bilayer. Residues 1306 to 1381 (YLQNHRYKGS…PQILEESRSE (76 aa)) lie on the Cytoplasmic side of the membrane. The tract at residues 1317-1381 (HTNEPKATHD…PQILEESRSE (65 aa)) is disordered. The segment covering 1319–1329 (NEPKATHDSHP) has biased composition (basic and acidic residues). The SH3-binding signature appears at 1329–1366 (PGGKAPLPPSGPAQAPAPTPAPTQVPTPAPAPASGPGP). Over residues 1334 to 1363 (PLPPSGPAQAPAPTPAPTQVPTPAPAPASG) the composition is skewed to pro residues. Ser-1380 is modified (phosphoserine).

The protein belongs to the neurexin family. In terms of assembly, interacts with CNTN1/contactin in cis form. As to expression, predominantly expressed in brain. In myelinated nerve fibers of the CNS predominantly found in paranodal axoglial junctions. In unmyelinated nerve fibers of the CNS diffusely distributed along the entire surface. Weak expression is detected in ovary, pancreas, colon, lung, heart, intestine and testis.

Its subcellular location is the membrane. It is found in the cell junction. The protein localises to the paranodal septate junction. Functionally, required, with CNTNAP2, for radial and longitudinal organization of myelinated axons. Plays a role in the formation of functional distinct domains critical for saltatory conduction of nerve impulses in myelinated nerve fibers. Demarcates the paranodal region of the axo-glial junction. In association with contactin involved in the signaling between axons and myelinating glial cells. The sequence is that of Contactin-associated protein 1 (Cntnap1) from Rattus norvegicus (Rat).